The primary structure comprises 435 residues: 3-ketoacyl-CoA thiolase (435 aa).

The active-site Acyl-thioester intermediate is the Cys98. Residues His391 and Cys421 each act as proton acceptor in the active site.

The protein belongs to the thiolase-like superfamily. Thiolase family. Heterotetramer of two alpha chains (FadJ) and two beta chains (FadI).

It is found in the cytoplasm. The enzyme catalyses an acyl-CoA + acetyl-CoA = a 3-oxoacyl-CoA + CoA. It participates in lipid metabolism; fatty acid beta-oxidation. Its function is as follows. Catalyzes the final step of fatty acid oxidation in which acetyl-CoA is released and the CoA ester of a fatty acid two carbons shorter is formed. This is 3-ketoacyl-CoA thiolase from Vibrio parahaemolyticus serotype O3:K6 (strain RIMD 2210633).